We begin with the raw amino-acid sequence, 498 residues long: Pre-glycoprotein polyprotein GP complex (498 aa).

A lipid anchor (N-myristoyl glycine; by host) is attached at Gly-2. Over Gly-2–Glu-17 the chain is Extracellular. A helical transmembrane segment spans residues Val-18–Lys-33. The Cytoplasmic portion of the chain corresponds to Ala-34–Gly-58. Position 57 (Cys-57) interacts with Zn(2+). Residues Met-59–Asp-438 lie on the Extracellular side of the membrane. N-linked (GlcNAc...) asparagine; by host glycosylation is found at Asn-85, Asn-95, Asn-114, Asn-124, and Asn-171. 6 disulfide bridges follow: Cys-92–Cys-239, Cys-123–Cys-160, Cys-184–Cys-220, Cys-285–Cys-298, Cys-307–Cys-316, and Cys-370–Cys-391. A glycan (N-linked (GlcNAc...) asparagine; by host) is linked at Asn-232. Asn-371, Asn-396, and Asn-401 each carry an N-linked (GlcNAc...) asparagine; by host glycan. The chain crosses the membrane as a helical span at residues Leu-439–Pro-459. The Cytoplasmic segment spans residues Thr-460–Arg-498. His-461, His-463, Cys-469, His-473, Cys-481, and Cys-483 together coordinate Zn(2+).

Belongs to the arenaviridae GPC protein family. As to quaternary structure, interacts with glycoprotein G2. Part of the GP complex (GP-C) together with glycoprotein G1 and glycoprotein G2. The GP-complex interacts with protein Z, which interacts with ribonucleocapsid; these interactions may induce virion budding. In terms of assembly, homotrimer; disulfide-linked. In pre-fusion state, G1 homotrimers bind G2 homotrimers via ionic interactions. Part of the GP complex (GP-C) together with glycoprotein G2 and the stable signal peptide. Interacts with the primary host receptor DAG1 on the cell surface. The GP-complex interacts with protein Z, which interacts with ribonucleocapsid; these interactions may induce virion budding. Homotrimer. Interacts with the stable signal peptide. In pre-fusion state, G2 homotrimers bind G1 homotrimers via ionic interactions. Part of the GP complex (GP-C) together with glycoprotein G1 and the stable signal peptide. Acidification in the endosome triggers rearrangements, which ultimately leads to a 6 helix bundle formed by the two heptad repeat domains (HR1 and HR2) in post-fusion state. The GP-complex interacts with protein Z, which interacts with ribonucleocapsid; these interactions may induce virion budding. Specific enzymatic cleavages in vivo yield mature proteins. GP-C polyprotein is cleaved in the endoplasmic reticulum by the host protease MBTPS1. Only cleaved glycoprotein is incorporated into virions. In terms of processing, the SSP remains stably associated with the GP complex following cleavage by signal peptidase and plays crucial roles in the trafficking of GP through the secretory pathway. Post-translationally, myristoylation is necessary for GP2-mediated fusion activity. Inhibition of host myristoylation by the compound DDD85646 leads to the abrogation of GP2-mediated fusion upon exposure to low pH and inhibition of viral multiplication.

It is found in the virion membrane. It localises to the host endoplasmic reticulum membrane. The protein resides in the host Golgi apparatus membrane. Its subcellular location is the host cell membrane. Functionally, functions as a cleaved signal peptide that is retained as the third component of the GP complex (GP-C). Helps to stabilize the spike complex in its native conformation. The SSP is required for efficient glycoprotein expression, post-translational maturation cleavage of G1 and G2, glycoprotein transport to the cell surface plasma membrane, formation of infectious virus particles, and acid pH-dependent glycoprotein-mediated cell fusion. Forms the virion spikes together with glycoprotein G2. The glycoprotein spike trimers are connected to the underlying matrix. Interacts with the host receptor. Mediates virus attachment to the host primary receptor alpha-dystroglycan DAG1 (alpha-DG) at the cell surface. Down-modulates host DAG1. Its function is as follows. Forms the virion spikes together with glycoprotein G1. The glycoprotein spike trimers are connected to the underlying matrix. Class I viral fusion protein that directs fusion of viral and host endosomal membranes, leading to delivery of the nucleocapsid into the cytoplasm. Membrane fusion is mediated by irreversible conformational changes induced by acidification. The chain is Pre-glycoprotein polyprotein GP complex from Homo sapiens (Human).